The following is a 263-amino-acid chain: 3-methyl-2-oxobutanoate hydroxymethyltransferase (263 aa).

Positions 45 and 84 each coordinate Mg(2+). 3-methyl-2-oxobutanoate contacts are provided by residues 45–46 (DS), Asp-84, and Lys-112. Glu-114 contacts Mg(2+). The active-site Proton acceptor is Glu-180.

The protein belongs to the PanB family. As to quaternary structure, homodecamer; pentamer of dimers. It depends on Mg(2+) as a cofactor.

The protein resides in the cytoplasm. The catalysed reaction is 3-methyl-2-oxobutanoate + (6R)-5,10-methylene-5,6,7,8-tetrahydrofolate + H2O = 2-dehydropantoate + (6S)-5,6,7,8-tetrahydrofolate. The protein operates within cofactor biosynthesis; (R)-pantothenate biosynthesis; (R)-pantoate from 3-methyl-2-oxobutanoate: step 1/2. In terms of biological role, catalyzes the reversible reaction in which hydroxymethyl group from 5,10-methylenetetrahydrofolate is transferred onto alpha-ketoisovalerate to form ketopantoate. The protein is 3-methyl-2-oxobutanoate hydroxymethyltransferase of Enterobacter sp. (strain 638).